The chain runs to 327 residues: Homeotic protein distal-less (327 aa).

The homeobox DNA-binding region spans M124–M183. The tract at residues K181–M303 is disordered. Over residues L231 to P249 the composition is skewed to low complexity. Over residues Q266–P275 the composition is skewed to basic and acidic residues. A compositionally biased stretch (pro residues) spans P276–P286.

Expressed in the embryo in limb primordia of the head and thoracic segments. Expressed in regions of the larval leg, wing, antennal and haltere disks that form the distal-most regions of the mature structures (in the leg this corresponds to the tarsus and the distal tibia). Found in the optic center of the developing larval brain.

The protein resides in the nucleus. In terms of biological role, transcription factor that plays a role in larval and adult appendage development. Specifies the identity of ventral appendages (including legs and antennae) and suppresses dorsal appendage development. Involved in patterning the distal-proximal limb axis. May control the adhesive properties of cells during limb morphogenesis. Also has a secondary role in the normal patterning of the wing margin. The protein is Homeotic protein distal-less (Dll) of Drosophila melanogaster (Fruit fly).